The chain runs to 196 residues: Superantigen-like protein 11 (196 aa).

Residues 65–167 (LDVFVVREGS…RVTMKNGDFY (103 aa)) form a sialyl Lewis X-binding region.

Belongs to the staphylococcal/streptococcal toxin family. Homodimer (via its C-terminal domain). Interacts with host FCAR and SELPLG (via sialyl Lewis X).

The protein resides in the secreted. Functionally, secreted protein that plays a role in the inhibition of host immune system. Targets myeloid cells such as monocytes or granulocytes through binding with sialyllactosamine-containing glycoproteins. Prevents initial rolling of neutrophils toward the site of infection by interacting with host SELPLG. Disrupts neutrophil motility by induction of cell adhesion via interacting with glycans but independently of SELPLG. The polypeptide is Superantigen-like protein 11 (Staphylococcus aureus).